A 414-amino-acid polypeptide reads, in one-letter code: Histidine--tRNA ligase (414 aa).

It belongs to the class-II aminoacyl-tRNA synthetase family. As to quaternary structure, homodimer.

Its subcellular location is the cytoplasm. The catalysed reaction is tRNA(His) + L-histidine + ATP = L-histidyl-tRNA(His) + AMP + diphosphate + H(+). The polypeptide is Histidine--tRNA ligase (Anaeromyxobacter dehalogenans (strain 2CP-1 / ATCC BAA-258)).